The primary structure comprises 70 residues: Turripeptide Gsp9.3 (70 aa).

The signal sequence occupies residues methionine 1 to glycine 20. One can recognise a Kazal-like domain in the interval glutamine 21–cysteine 70. 3 disulfides stabilise this stretch: cysteine 26/cysteine 56, cysteine 30/cysteine 49, and cysteine 38/cysteine 70.

The protein belongs to the conopeptide P-like superfamily. Expressed by the venom duct.

The protein localises to the secreted. In terms of biological role, acts as a neurotoxin by inhibiting an ion channel. May also act as a serine protease inhibitor, since it possess the kazal serine protease inhibitor signature. The sequence is that of Turripeptide Gsp9.3 from Gemmula speciosa (Splendid gem-turris).